The chain runs to 398 residues: LL-diaminopimelate aminotransferase (398 aa).

Substrate-binding residues include Tyr-14 and Gly-41. Pyridoxal 5'-phosphate-binding positions include Tyr-71, Ala-104–Lys-105, Tyr-128, Asn-174, Tyr-205, and Ser-233–Ser-235. Positions 105, 128, and 174 each coordinate substrate. Lys-236 carries the post-translational modification N6-(pyridoxal phosphate)lysine. Pyridoxal 5'-phosphate contacts are provided by Arg-244 and Asn-275. Substrate-binding residues include Asn-275 and Arg-368.

This sequence belongs to the class-I pyridoxal-phosphate-dependent aminotransferase family. LL-diaminopimelate aminotransferase subfamily. Homodimer. Requires pyridoxal 5'-phosphate as cofactor.

The catalysed reaction is (2S,6S)-2,6-diaminopimelate + 2-oxoglutarate = (S)-2,3,4,5-tetrahydrodipicolinate + L-glutamate + H2O + H(+). It functions in the pathway amino-acid biosynthesis; L-lysine biosynthesis via DAP pathway; LL-2,6-diaminopimelate from (S)-tetrahydrodipicolinate (aminotransferase route): step 1/1. Involved in the synthesis of meso-diaminopimelate (m-DAP or DL-DAP), required for both lysine and peptidoglycan biosynthesis. Catalyzes the direct conversion of tetrahydrodipicolinate to LL-diaminopimelate. In Chlamydia felis (strain Fe/C-56) (Chlamydophila felis), this protein is LL-diaminopimelate aminotransferase.